The following is a 543-amino-acid chain: MKTLASRKSLWMLLFIVIFWVSFTVFRNPVKLRTMFKLPVSFNRWNLVMGPSCPAVPLNLPVSPKETELRIREVLEKLDKQIPPRPFTHLNYTTSATHSTATILNPRDTHCVGDQLDILVEARDHLGNRKGYGGDFMRARMFSPALKAGASGKVTDFNNGTYLVSFTLFWEGTVSLSILLMHPSEGVSALWRSRKQGYDRIIFSGQFVSGASQVHTECALVLNSSVELCQYLDAQDQEAFYCVKPPNVPCAALTYMQSKNKDVSYLSQQERSLFERSNIAVEIMEKSNAISVSKCNTDTAPVKEKCKLGMVSAIPSGHVWKNAWTPASCSLAPIKMKDCLRGKFIYLMGDSTIRQWMEYFKSKVNTLRSVDLHESGKLQHQLAVDLDEKISIQWQKHGYPLIGSLVYSVKEIENIARIIDRTGGEKNTVIVISLGQHFRPFPIDLFIRRALNVHKALQRLLLRSPDTVVVLKTENTRELNSDVERFSDFHGYTQYLALKDIFQDLNVGVIDAWDMTVAYGINNVHPPEDVVRSQINIFLNYIC.

A signal peptide spans 1-26; sequence MKTLASRKSLWMLLFIVIFWVSFTVF. Residues asparagine 91, asparagine 159, and asparagine 223 are each glycosylated (N-linked (GlcNAc...) asparagine).

It belongs to the NXPE family.

The protein resides in the secreted. This Mus musculus (Mouse) protein is NXPE family member 4 (Nxpe4).